The following is an 85-amino-acid chain: DNA-directed RNA polymerase subunit beta'' (85 aa).

This sequence belongs to the RNA polymerase beta' chain family. RpoC2 subfamily. In plastids the minimal PEP RNA polymerase catalytic core is composed of four subunits: alpha, beta, beta', and beta''. When a (nuclear-encoded) sigma factor is associated with the core the holoenzyme is formed, which can initiate transcription.

The protein resides in the plastid. It localises to the chloroplast. It catalyses the reaction RNA(n) + a ribonucleoside 5'-triphosphate = RNA(n+1) + diphosphate. In terms of biological role, DNA-dependent RNA polymerase catalyzes the transcription of DNA into RNA using the four ribonucleoside triphosphates as substrates. This chain is DNA-directed RNA polymerase subunit beta'' (rpoC2), found in Galdieria sulphuraria (Red alga).